Reading from the N-terminus, the 75-residue chain is U6-lycotoxin-Ls1d (75 aa).

The signal sequence occupies residues 1–21 (MKLLLFTALVLVVISLVEVEA). Residues 22–25 (ENER) constitute a propeptide that is removed on maturation.

It belongs to the neurotoxin 19 (CSTX) family. 06 (U6-Lctx) subfamily. Post-translationally, contains 4 disulfide bonds. Expressed by the venom gland.

The protein localises to the secreted. The polypeptide is U6-lycotoxin-Ls1d (Lycosa singoriensis (Wolf spider)).